Here is a 311-residue protein sequence, read N- to C-terminus: MSQNQDISKKEQYNLNKLQKRLRRNVGEAIADFNMIEEGDRIMVCLSGGKDSYTMLEILRNLQQSAPVNFSLVAVNLDQKQPGFPEHILPEYLENLGVEYKIVEENTYGIVKEKIPEGKTTCSLCSRLRRGILYRTATELGATKIALGHHRDDILQTLFLNMFYGGKMKGMPPKLMSDDGKHIVIRPLAYCREKDIERFSEAKAFPIIPCNLCGSQPNLQRQVIADMLRDWDKRYPGRIETMFSAMQNVVPSHLSDINLFDFKGINHDSDVVDGGDLAFDREEIPLQPAGWQPEEDDNQLDELRLNVVEVK.

Positions 47-52 (SGGKDS) match the PP-loop motif motif. [4Fe-4S] cluster contacts are provided by Cys122, Cys125, and Cys213.

This sequence belongs to the TtcA family. In terms of assembly, homodimer. The cofactor is Mg(2+). It depends on [4Fe-4S] cluster as a cofactor.

The protein localises to the cytoplasm. The catalysed reaction is cytidine(32) in tRNA + S-sulfanyl-L-cysteinyl-[cysteine desulfurase] + AH2 + ATP = 2-thiocytidine(32) in tRNA + L-cysteinyl-[cysteine desulfurase] + A + AMP + diphosphate + H(+). The protein operates within tRNA modification. Its function is as follows. Catalyzes the ATP-dependent 2-thiolation of cytidine in position 32 of tRNA, to form 2-thiocytidine (s(2)C32). The sulfur atoms are provided by the cysteine/cysteine desulfurase (IscS) system. The sequence is that of tRNA-cytidine(32) 2-sulfurtransferase from Citrobacter koseri (strain ATCC BAA-895 / CDC 4225-83 / SGSC4696).